Here is a 141-residue protein sequence, read N- to C-terminus: Nucleoside diphosphate kinase (141 aa).

ATP contacts are provided by lysine 11, phenylalanine 59, arginine 87, threonine 93, arginine 104, and asparagine 114. Histidine 117 functions as the Pros-phosphohistidine intermediate in the catalytic mechanism.

This sequence belongs to the NDK family. In terms of assembly, homotetramer. It depends on Mg(2+) as a cofactor.

The protein resides in the cytoplasm. It catalyses the reaction a 2'-deoxyribonucleoside 5'-diphosphate + ATP = a 2'-deoxyribonucleoside 5'-triphosphate + ADP. It carries out the reaction a ribonucleoside 5'-diphosphate + ATP = a ribonucleoside 5'-triphosphate + ADP. Major role in the synthesis of nucleoside triphosphates other than ATP. The ATP gamma phosphate is transferred to the NDP beta phosphate via a ping-pong mechanism, using a phosphorylated active-site intermediate. This chain is Nucleoside diphosphate kinase, found in Cellvibrio japonicus (strain Ueda107) (Pseudomonas fluorescens subsp. cellulosa).